The sequence spans 369 residues: UDP-N-acetylglucosamine--N-acetylmuramyl-(pentapeptide) pyrophosphoryl-undecaprenol N-acetylglucosamine transferase (369 aa).

UDP-N-acetyl-alpha-D-glucosamine is bound by residues 10–12, N124, R161, S195, and Q295; that span reads TAG.

It belongs to the glycosyltransferase 28 family. MurG subfamily.

The protein localises to the cell membrane. It carries out the reaction di-trans,octa-cis-undecaprenyl diphospho-N-acetyl-alpha-D-muramoyl-L-alanyl-D-glutamyl-meso-2,6-diaminopimeloyl-D-alanyl-D-alanine + UDP-N-acetyl-alpha-D-glucosamine = di-trans,octa-cis-undecaprenyl diphospho-[N-acetyl-alpha-D-glucosaminyl-(1-&gt;4)]-N-acetyl-alpha-D-muramoyl-L-alanyl-D-glutamyl-meso-2,6-diaminopimeloyl-D-alanyl-D-alanine + UDP + H(+). The protein operates within cell wall biogenesis; peptidoglycan biosynthesis. Functionally, cell wall formation. Catalyzes the transfer of a GlcNAc subunit on undecaprenyl-pyrophosphoryl-MurNAc-pentapeptide (lipid intermediate I) to form undecaprenyl-pyrophosphoryl-MurNAc-(pentapeptide)GlcNAc (lipid intermediate II). The chain is UDP-N-acetylglucosamine--N-acetylmuramyl-(pentapeptide) pyrophosphoryl-undecaprenol N-acetylglucosamine transferase from Acidothermus cellulolyticus (strain ATCC 43068 / DSM 8971 / 11B).